A 387-amino-acid polypeptide reads, in one-letter code: MDKHKDRIESMRLILQVMQLFGLWPWSLKSEEEWTFTGFVKRNYRFLLHLPITFTFIGLMWLEAFISSNLEQAGQVLYMSITEMALVVKILSIWHYRTEAWRLMYELQHAPDYQLHNQEEVDFWRREQRFFKWFFYIYILISLGVVYSGCTGVLFLEGYELPFAYYVPFEWQNERRYWFAYGYDMAGMTLTCISNITLDTLGCYFLFHISLLYRLLGLRLRETKNMKNDTIFGQQLRAIFIMHQRIRSLTLTCQRIVSPYILSQIILSALIICFSGYRLQHVGIRDNPGQFISMLQFVSVMILQIYLPCYYGNEITVYANQLTNEVYHTNWLECRPPIRKLLNAYMEHLKKPVTIRAGNFFAVGLPIFVKTINNAYSFLALLLNVSN.

At 1-45 (MDKHKDRIESMRLILQVMQLFGLWPWSLKSEEEWTFTGFVKRNYR) the chain is on the cytoplasmic side. A helical membrane pass occupies residues 46 to 66 (FLLHLPITFTFIGLMWLEAFI). Over 67–75 (SSNLEQAGQ) the chain is Extracellular. The chain crosses the membrane as a helical span at residues 76–96 (VLYMSITEMALVVKILSIWHY). At 97 to 133 (RTEAWRLMYELQHAPDYQLHNQEEVDFWRREQRFFKW) the chain is on the cytoplasmic side. Residues 134–154 (FFYIYILISLGVVYSGCTGVL) traverse the membrane as a helical segment. Residues 155-191 (FLEGYELPFAYYVPFEWQNERRYWFAYGYDMAGMTLT) are Extracellular-facing. The chain crosses the membrane as a helical span at residues 192–212 (CISNITLDTLGCYFLFHISLL). At 213 to 255 (YRLLGLRLRETKNMKNDTIFGQQLRAIFIMHQRIRSLTLTCQR) the chain is on the cytoplasmic side. The helical transmembrane segment at 256–276 (IVSPYILSQIILSALIICFSG) threads the bilayer. At 277–290 (YRLQHVGIRDNPGQ) the chain is on the extracellular side. A helical membrane pass occupies residues 291–311 (FISMLQFVSVMILQIYLPCYY). The Cytoplasmic segment spans residues 312-362 (GNEITVYANQLTNEVYHTNWLECRPPIRKLLNAYMEHLKKPVTIRAGNFFA). The helical transmembrane segment at 363–383 (VGLPIFVKTINNAYSFLALLL) threads the bilayer. An N-linked (GlcNAc...) asparagine glycan is attached at asparagine 384. At 384 to 387 (NVSN) the chain is on the extracellular side.

This sequence belongs to the insect chemoreceptor superfamily. Heteromeric odorant receptor channel (TC 1.A.69) family. Or2a subfamily. Interacts with Orco. Complexes exist early in the endomembrane system in olfactory sensory neurons (OSNs), coupling these complexes to the conserved ciliary trafficking pathway.

The protein resides in the cell membrane. In terms of biological role, odorant receptor which mediates acceptance or avoidance behavior, depending on its substrates. The odorant receptor repertoire encodes a large collection of odor stimuli that vary widely in identity, intensity, and duration. May form a complex with Orco to form odorant-sensing units, providing sensitive and prolonged odorant signaling and calcium permeability. The chain is Odorant receptor 94a (Or94a) from Drosophila melanogaster (Fruit fly).